Reading from the N-terminus, the 143-residue chain is Transcriptional regulator MraZ (143 aa).

2 SpoVT-AbrB domains span residues Gln5–Glu47 and Ala76–Val119.

Belongs to the MraZ family. As to quaternary structure, forms oligomers.

The protein localises to the cytoplasm. Its subcellular location is the nucleoid. The chain is Transcriptional regulator MraZ from Caldanaerobacter subterraneus subsp. tengcongensis (strain DSM 15242 / JCM 11007 / NBRC 100824 / MB4) (Thermoanaerobacter tengcongensis).